The sequence spans 229 residues: Lipoprotein-releasing system ATP-binding protein LolD (229 aa).

Positions 7 to 229 (LQCINLTKSF…KNGQLFNNKN (223 aa)) constitute an ABC transporter domain. Position 43 to 50 (43 to 50 (GKSGSGKS)) interacts with ATP.

It belongs to the ABC transporter superfamily. Lipoprotein translocase (TC 3.A.1.125) family. The complex is composed of two ATP-binding proteins (LolD) and two transmembrane proteins (LolC and LolE).

It localises to the cell inner membrane. Part of the ABC transporter complex LolCDE involved in the translocation of mature outer membrane-directed lipoproteins, from the inner membrane to the periplasmic chaperone, LolA. Responsible for the formation of the LolA-lipoprotein complex in an ATP-dependent manner. This chain is Lipoprotein-releasing system ATP-binding protein LolD, found in Buchnera aphidicola subsp. Schizaphis graminum (strain Sg).